We begin with the raw amino-acid sequence, 146 residues long: Large ribosomal subunit protein uL15 (146 aa).

A disordered region spans residues 1 to 56; sequence MKLHELRAAEGANKASKRVGRGTGSGLGKTSGKGQNGQNSRSGGGVRPGFEGGQMP. Composition is skewed to gly residues over residues 21–35 and 42–52; these read RGTGSGLGKTSGKGQ and SGGGVRPGFEG.

The protein belongs to the universal ribosomal protein uL15 family. In terms of assembly, part of the 50S ribosomal subunit.

In terms of biological role, binds to the 23S rRNA. The polypeptide is Large ribosomal subunit protein uL15 (Clostridium botulinum (strain Loch Maree / Type A3)).